Reading from the N-terminus, the 337-residue chain is DNA-directed RNA polymerase subunit alpha (337 aa).

The segment at M1–E233 is alpha N-terminal domain (alpha-NTD). An alpha C-terminal domain (alpha-CTD) region spans residues F249–Y337.

The protein belongs to the RNA polymerase alpha chain family. In terms of assembly, homodimer. The RNAP catalytic core consists of 2 alpha, 1 beta, 1 beta' and 1 omega subunit. When a sigma factor is associated with the core the holoenzyme is formed, which can initiate transcription.

It carries out the reaction RNA(n) + a ribonucleoside 5'-triphosphate = RNA(n+1) + diphosphate. Functionally, DNA-dependent RNA polymerase catalyzes the transcription of DNA into RNA using the four ribonucleoside triphosphates as substrates. This Bartonella quintana (strain Toulouse) (Rochalimaea quintana) protein is DNA-directed RNA polymerase subunit alpha.